The primary structure comprises 937 residues: Protein translocase subunit SecA (937 aa).

Residues Gln-90, 108-112 (GEGKT), and Asp-509 contribute to the ATP site.

Belongs to the SecA family. As to quaternary structure, monomer and homodimer. Part of the essential Sec protein translocation apparatus which comprises SecA, SecYEG and auxiliary proteins SecDF. Other proteins may also be involved.

It localises to the cell inner membrane. The protein localises to the cellular thylakoid membrane. The protein resides in the cytoplasm. The enzyme catalyses ATP + H2O + cellular proteinSide 1 = ADP + phosphate + cellular proteinSide 2.. In terms of biological role, part of the Sec protein translocase complex. Interacts with the SecYEG preprotein conducting channel. Has a central role in coupling the hydrolysis of ATP to the transfer of proteins into and across the cell membrane, serving as an ATP-driven molecular motor driving the stepwise translocation of polypeptide chains across the membrane. Probably participates in protein translocation into and across both the cytoplasmic and thylakoid membranes in cyanobacterial cells. The chain is Protein translocase subunit SecA from Parasynechococcus marenigrum (strain WH8102).